Here is a 2636-residue protein sequence, read N- to C-terminus: Ankyrin repeat and KH domain-containing protein CBG24701 (2636 aa).

ANK repeat units lie at residues 252–281 (SRIT…DPNA), 286–317 (NCNT…KVDV), 361–390 (NDNS…KNQQ), 435–464 (NLPS…RIDE), 468–500 (HKNT…DVNA), 505–534 (SGDT…DLTT), 536–564 (KITP…TIPQ), 566–595 (QLSR…DLNF), 598–627 (DERT…SVNF), 632–661 (NDAT…DPML), and 665–695 (DGVN…NMDL). Disordered stretches follow at residues 994–1030 (PIDA…TTIE), 1172–1191 (KSNR…KKGK), and 1230–1268 (NNTQ…VIDK). The span at 1006–1030 (QQTGPKTTSLTTPQPDESNGATTIE) shows a compositional bias: polar residues. Positions 1233 to 1245 (QVQQQQGQQQQGQ) are enriched in low complexity. Basic and acidic residues predominate over residues 1249–1260 (THSEGDGTERAK). 10 ANK repeats span residues 1273–1302 (TLET…NIEH), 1306–1335 (KGFT…AIEA), 1340–1369 (TKDT…NKEH), 1373–1402 (SDYT…EINS), 1408–1437 (LGIS…DINA), 1447–1476 (YRNT…NVEH), 1480–1509 (TGLT…DPNA), 1515–1546 (TKDT…DIRN), 1548–1577 (KGCS…DTDM), and 1581–1610 (RKMS…QFPN). Residues 1638-1696 (RNAKKAQAETAEETANRLLQLIDDEKERDINKKQKIKDKKKQKKEAKKKFQAEQEQLSA) are a coiled coil. Residues 1669–1857 (KKQKIKDKKK…SSISERQHSW (189 aa)) form a disordered region. Residues 1670 to 1686 (KQKIKDKKKQKKEAKKK) show a composition bias toward basic residues. Residues 1698–1708 (PSKPEPVVAPE) are compositionally biased toward pro residues. The segment covering 1709 to 1722 (PEPEPETEPVEEPA) has biased composition (acidic residues). Over residues 1811 to 1829 (DWQKAGKEGKKVRPKREGR) the composition is skewed to basic and acidic residues. Positions 1832–1851 (APSSAGSSQAKHRSNTSSIS) are enriched in polar residues. The region spanning 1864–1929 (VKAYEFTVPG…DVVSMAVNII (66 aa)) is the KH domain. Disordered regions lie at residues 1980–2182 (SASI…SLPS), 2196–2221 (FKPT…STAS), 2269–2292 (NSTA…SNDF), 2301–2320 (SNQK…NSQL), 2352–2417 (SQSS…TQQQ), 2444–2465 (MHRQ…NPYY), and 2539–2636 (GMMQ…SSRM). Positions 1994-2008 (SQCNRSSKSHGNQAT) are enriched in polar residues. Over residues 2025–2045 (TPPTQTQTKQQPTPSPQVQQP) the composition is skewed to low complexity. A compositionally biased stretch (polar residues) spans 2057–2083 (SLAQSSVPQATENVTKPTQTPPASVQQ). 2 stretches are compositionally biased toward low complexity: residues 2099–2119 (QVVQ…QRPQ) and 2139–2148 (QQHMQQIQQQ). The span at 2167 to 2179 (PGPPVQPQTPPQS) shows a compositional bias: pro residues. The segment covering 2269 to 2280 (NSTASSLNTATT) has biased composition (low complexity). The span at 2281 to 2292 (KNDTSDWGSNDF) shows a compositional bias: polar residues. 2 stretches are compositionally biased toward low complexity: residues 2361–2373 (QHQQ…MQDP) and 2391–2417 (PQQF…TQQQ). 3 stretches are compositionally biased toward polar residues: residues 2449–2465 (NSSS…NPYY), 2565–2574 (RSASGSSQNR), and 2583–2595 (QQPQ…TQAD). A compositionally biased stretch (low complexity) spans 2599–2615 (RLLLQQQQQQRSSQQQQ). Residues 2616–2636 (NPTNQGLPQKWSNTWNSSSRM) are compositionally biased toward polar residues.

The protein belongs to the mask family.

The protein resides in the cytoplasm. The protein is Ankyrin repeat and KH domain-containing protein CBG24701 of Caenorhabditis briggsae.